Here is a 1390-residue protein sequence, read N- to C-terminus: DNA-directed RNA polymerase subunit beta' (1390 aa).

4 residues coordinate Zn(2+): Cys70, Cys72, Cys85, and Cys88. Mg(2+)-binding residues include Asp460, Asp462, and Asp464. The Zn(2+) site is built by Cys814, Cys888, Cys895, and Cys898.

Belongs to the RNA polymerase beta' chain family. The RNAP catalytic core consists of 2 alpha, 1 beta, 1 beta' and 1 omega subunit. When a sigma factor is associated with the core the holoenzyme is formed, which can initiate transcription. The cofactor is Mg(2+). It depends on Zn(2+) as a cofactor.

It carries out the reaction RNA(n) + a ribonucleoside 5'-triphosphate = RNA(n+1) + diphosphate. In terms of biological role, DNA-dependent RNA polymerase catalyzes the transcription of DNA into RNA using the four ribonucleoside triphosphates as substrates. This Pseudoalteromonas translucida (strain TAC 125) protein is DNA-directed RNA polymerase subunit beta'.